Here is a 470-residue protein sequence, read N- to C-terminus: Transcriptional activator PmfR (470 aa).

In terms of assembly, forms oligomers in solution, probably homotetramers.

Its pathway is alkaloid degradation; nicotine degradation [regulation]. Transcriptional regulator involved in the activation of the purU-mabO-folD-nepA-nepB and mao-ORF55-nbr operons implicated in the nicotine catabolic pathway. The sequence GTTT-14 bp-AAAC seems to be the core binding site of the regulator upstream of the -35 promoter region of the operon. In Paenarthrobacter nicotinovorans (Arthrobacter nicotinovorans), this protein is Transcriptional activator PmfR (pmfR).